We begin with the raw amino-acid sequence, 505 residues long: Cytochrome P450 monooxygenase FGM1 (505 aa).

Positions 1–23 (MPLILSITSSGTVLVLLTLLSLA) are cleaved as a signal peptide. 2 N-linked (GlcNAc...) asparagine glycosylation sites follow: asparagine 188 and asparagine 351. A heme-binding site is contributed by cysteine 450.

It belongs to the cytochrome P450 family. It depends on heme as a cofactor.

It functions in the pathway secondary metabolite biosynthesis. Cytochrome P450 monooxygenase; part of the Fg3_54/C64 gene cluster that mediates the biosynthesis of the octapeptide fusaoctaxin A, a virulence factor that is required for cell-to-cell invasiveness of plant host. The 2 nonribosomal peptide synthetases NRPS9 and NRPS5 form an assembly line which likely utilizes GABA as a starter unit (loaded on the unique module M1 of NRPS9) and sequentially incorporates seven extender units composed of the residues L-Ala, L-allo-Ile, L-Ser, L-Val, L-Ser, L-Leu and L-Leu, respectively. During the process, each of the residues that are tethered on modules M3-M7 of NRPS5 containing an E domain can undergo an epimerization reaction to produce a D-configuration before the transpeptidation reaction occurs. The elongation of the peptidyl chain might be terminated by module M8-mediated L-Leu incorporation, followed by R domain-catalyzed 4 electron reduction to release the resulting octapeptide from the assembly line as an alcohol. Fusaoctaxin A is cleaved by the cluster specific ABC transporter FGM5 to the pentapeptide fusapentaxin A and the tripeptide fusatrixin A. The other enzymes from the cluster, FGM1, FGM2, FGM3 and FGM9 seem not to be involved in the biosynthesis of fusaoctaxin A and their functions have still to be determined. This Gibberella zeae (strain ATCC MYA-4620 / CBS 123657 / FGSC 9075 / NRRL 31084 / PH-1) (Wheat head blight fungus) protein is Cytochrome P450 monooxygenase FGM1.